A 312-amino-acid chain; its full sequence is Isoflavone reductase homolog (312 aa).

NADP(+) is bound by residues 10 to 16 (GGTGYVG), Arg-35, and Lys-44. Lys-138 acts as the Proton acceptor in catalysis. NADP(+) is bound at residue Arg-142. His-270 contacts substrate.

It belongs to the NmrA-type oxidoreductase family. Isoflavone reductase subfamily.

The chain is Isoflavone reductase homolog from Lupinus albus (White lupine).